Reading from the N-terminus, the 615-residue chain is UvrABC system protein C (615 aa).

The GIY-YIG domain occupies 12–91 (EKPGVYIMKD…IKKYKPKYNV (80 aa)). Residues 203–238 (DWLIQKLKEDMKKAAEELRFEEAARIRDQIFAIERT) form the UVR domain.

It belongs to the UvrC family. In terms of assembly, interacts with UvrB in an incision complex.

It localises to the cytoplasm. Functionally, the UvrABC repair system catalyzes the recognition and processing of DNA lesions. UvrC both incises the 5' and 3' sides of the lesion. The N-terminal half is responsible for the 3' incision and the C-terminal half is responsible for the 5' incision. This is UvrABC system protein C from Thermoanaerobacter sp. (strain X514).